Reading from the N-terminus, the 187-residue chain is Elongation factor P (187 aa).

It belongs to the elongation factor P family.

The protein localises to the cytoplasm. It participates in protein biosynthesis; polypeptide chain elongation. Involved in peptide bond synthesis. Stimulates efficient translation and peptide-bond synthesis on native or reconstituted 70S ribosomes in vitro. Probably functions indirectly by altering the affinity of the ribosome for aminoacyl-tRNA, thus increasing their reactivity as acceptors for peptidyl transferase. The polypeptide is Elongation factor P (Corynebacterium glutamicum (strain R)).